Reading from the N-terminus, the 149-residue chain is Ribonuclease pancreatic (149 aa).

Positions 1–25 are cleaved as a signal peptide; that stretch reads MGLEKSLILFPLFVLLLGWVQPSLG. A disordered region spans residues 30-49; the sequence is AQKFERQHMDSSGSSNNSPT. The substrate site is built by lysine 32 and arginine 35. Histidine 37 acts as the Proton acceptor in catalysis. Over residues 39–49 the composition is skewed to polar residues; it reads DSSGSSNNSPT. Intrachain disulfides connect cysteine 51–cysteine 109, cysteine 65–cysteine 120, cysteine 83–cysteine 135, and cysteine 90–cysteine 97. Residue 66 to 70 participates in substrate binding; it reads KPVNT. Asparagine 87 carries an N-linked (GlcNAc...) asparagine glycan. A substrate-binding site is contributed by lysine 91. Residue histidine 144 is the Proton donor of the active site.

The protein belongs to the pancreatic ribonuclease family. In terms of assembly, monomer. Interacts with and forms tight 1:1 complexes with RNH1. Dimerization of two such complexes may occur. Interaction with RNH1 inhibits this protein. In terms of tissue distribution, pancreas.

Its subcellular location is the secreted. It carries out the reaction an [RNA] containing cytidine + H2O = an [RNA]-3'-cytidine-3'-phosphate + a 5'-hydroxy-ribonucleotide-3'-[RNA].. The catalysed reaction is an [RNA] containing uridine + H2O = an [RNA]-3'-uridine-3'-phosphate + a 5'-hydroxy-ribonucleotide-3'-[RNA].. Its function is as follows. Endonuclease that catalyzes the cleavage of RNA on the 3' side of pyrimidine nucleotides. Acts on single-stranded and double-stranded RNA. The chain is Ribonuclease pancreatic (Rnase1) from Mus pahari (Gairdner's shrew-mouse).